The following is a 746-amino-acid chain: Polyribonucleotide nucleotidyltransferase (746 aa).

Mg(2+) is bound by residues aspartate 490 and aspartate 496. The 63-residue stretch at 557-619 (PRIETMIIGK…ATIDAAVKAI (63 aa)) folds into the KH domain. Positions 629–699 (GEVYEGKISS…KTGKFKLSRK (71 aa)) constitute an S1 motif domain. The disordered stretch occupies residues 701–746 (LLPKPEGYEERPPRPERGERGPRQDRGDRGPRQDRGDRGPRREYRD). The segment covering 706–746 (EGYEERPPRPERGERGPRQDRGDRGPRQDRGDRGPRREYRD) has biased composition (basic and acidic residues).

This sequence belongs to the polyribonucleotide nucleotidyltransferase family. Requires Mg(2+) as cofactor.

Its subcellular location is the cytoplasm. The enzyme catalyses RNA(n+1) + phosphate = RNA(n) + a ribonucleoside 5'-diphosphate. Its function is as follows. Involved in mRNA degradation. Catalyzes the phosphorolysis of single-stranded polyribonucleotides processively in the 3'- to 5'-direction. In Parabacteroides distasonis (strain ATCC 8503 / DSM 20701 / CIP 104284 / JCM 5825 / NCTC 11152), this protein is Polyribonucleotide nucleotidyltransferase.